Here is a 462-residue protein sequence, read N- to C-terminus: ATP synthase subunit beta (462 aa).

Residue 151-158 coordinates ATP; that stretch reads GGAGVGKT.

Belongs to the ATPase alpha/beta chains family. In terms of assembly, F-type ATPases have 2 components, CF(1) - the catalytic core - and CF(0) - the membrane proton channel. CF(1) has five subunits: alpha(3), beta(3), gamma(1), delta(1), epsilon(1). CF(0) has four main subunits: a(1), b(1), b'(1) and c(9-12).

It is found in the cell inner membrane. It carries out the reaction ATP + H2O + 4 H(+)(in) = ADP + phosphate + 5 H(+)(out). Produces ATP from ADP in the presence of a proton gradient across the membrane. The catalytic sites are hosted primarily by the beta subunits. This chain is ATP synthase subunit beta, found in Pelodictyon phaeoclathratiforme (strain DSM 5477 / BU-1).